The chain runs to 571 residues: Sulfite reductase [NADPH] hemoprotein beta-component (571 aa).

[4Fe-4S] cluster-binding residues include Cys435, Cys441, Cys480, and Cys484. Cys484 contacts siroheme.

It belongs to the nitrite and sulfite reductase 4Fe-4S domain family. Alpha(8)-beta(8). The alpha component is a flavoprotein, the beta component is a hemoprotein. Siroheme is required as a cofactor. It depends on [4Fe-4S] cluster as a cofactor.

The catalysed reaction is hydrogen sulfide + 3 NADP(+) + 3 H2O = sulfite + 3 NADPH + 4 H(+). Its pathway is sulfur metabolism; hydrogen sulfide biosynthesis; hydrogen sulfide from sulfite (NADPH route): step 1/1. Its function is as follows. Component of the sulfite reductase complex that catalyzes the 6-electron reduction of sulfite to sulfide. This is one of several activities required for the biosynthesis of L-cysteine from sulfate. This chain is Sulfite reductase [NADPH] hemoprotein beta-component, found in Dickeya chrysanthemi (strain Ech1591) (Dickeya zeae (strain Ech1591)).